Reading from the N-terminus, the 603-residue chain is Elongation factor 4 (603 aa).

The 185-residue stretch at 7-191 (DNIRNFSIVA…AIVTRLPPPK (185 aa)) folds into the tr-type G domain. GTP-binding positions include 19 to 24 (DHGKST) and 138 to 141 (NKVD).

This sequence belongs to the TRAFAC class translation factor GTPase superfamily. Classic translation factor GTPase family. LepA subfamily.

Its subcellular location is the cell inner membrane. The catalysed reaction is GTP + H2O = GDP + phosphate + H(+). Functionally, required for accurate and efficient protein synthesis under certain stress conditions. May act as a fidelity factor of the translation reaction, by catalyzing a one-codon backward translocation of tRNAs on improperly translocated ribosomes. Back-translocation proceeds from a post-translocation (POST) complex to a pre-translocation (PRE) complex, thus giving elongation factor G a second chance to translocate the tRNAs correctly. Binds to ribosomes in a GTP-dependent manner. This chain is Elongation factor 4, found in Rhodopseudomonas palustris (strain BisA53).